The chain runs to 374 residues: tRNA-specific 2-thiouridylase MnmA (374 aa).

Residues 17–24 (GMSGGVDS) and Met43 each bind ATP. Residues 103–105 (NPD) form an interaction with target base in tRNA region. Cys108 (nucleophile) is an active-site residue. A disulfide bridge connects residues Cys108 and Cys204. An ATP-binding site is contributed by Gly132. The interaction with tRNA stretch occupies residues 154-156 (KDQ). Cys204 serves as the catalytic Cysteine persulfide intermediate. Residues 316-317 (RY) form an interaction with tRNA region.

This sequence belongs to the MnmA/TRMU family.

The protein resides in the cytoplasm. It carries out the reaction S-sulfanyl-L-cysteinyl-[protein] + uridine(34) in tRNA + AH2 + ATP = 2-thiouridine(34) in tRNA + L-cysteinyl-[protein] + A + AMP + diphosphate + H(+). In terms of biological role, catalyzes the 2-thiolation of uridine at the wobble position (U34) of tRNA, leading to the formation of s(2)U34. The sequence is that of tRNA-specific 2-thiouridylase MnmA from Pseudomonas putida (strain W619).